A 399-amino-acid chain; its full sequence is Elongation factor Tu (399 aa).

The tr-type G domain occupies 10–204 (KPHVNIGTIG…AVDASIPEPE (195 aa)). Residues 19 to 26 (GHVDHGKT) are G1. 19–26 (GHVDHGKT) is a binding site for GTP. Threonine 26 lines the Mg(2+) pocket. A G2 region spans residues 60-64 (GITIN). The G3 stretch occupies residues 81 to 84 (DCPG). Residues 81-85 (DCPGH) and 136-139 (NKCD) each bind GTP. The G4 stretch occupies residues 136 to 139 (NKCD). Residues 174 to 176 (SGL) are G5.

Belongs to the TRAFAC class translation factor GTPase superfamily. Classic translation factor GTPase family. EF-Tu/EF-1A subfamily. In terms of assembly, monomer.

It localises to the cytoplasm. The enzyme catalyses GTP + H2O = GDP + phosphate + H(+). GTP hydrolase that promotes the GTP-dependent binding of aminoacyl-tRNA to the A-site of ribosomes during protein biosynthesis. This is Elongation factor Tu from Prochlorococcus marinus subsp. pastoris (strain CCMP1986 / NIES-2087 / MED4).